A 338-amino-acid polypeptide reads, in one-letter code: Methionine synthase (338 aa).

His-210, Cys-212, Glu-234, and Cys-294 together coordinate Zn(2+).

This sequence belongs to the archaeal MetE family. Requires Zn(2+) as cofactor.

It participates in amino-acid biosynthesis; L-methionine biosynthesis via de novo pathway. Catalyzes the transfer of a methyl group to L-homocysteine resulting in methionine formation. The physiological methyl donor is unknown. The polypeptide is Methionine synthase (Pyrococcus furiosus (strain ATCC 43587 / DSM 3638 / JCM 8422 / Vc1)).